A 188-amino-acid chain; its full sequence is Peptidyl-tRNA hydrolase (188 aa).

TRNA is bound at residue tyrosine 17. Histidine 22 (proton acceptor) is an active-site residue. TRNA contacts are provided by tyrosine 65, asparagine 67, and asparagine 113.

Belongs to the PTH family. Monomer.

The protein localises to the cytoplasm. The enzyme catalyses an N-acyl-L-alpha-aminoacyl-tRNA + H2O = an N-acyl-L-amino acid + a tRNA + H(+). In terms of biological role, hydrolyzes ribosome-free peptidyl-tRNAs (with 1 or more amino acids incorporated), which drop off the ribosome during protein synthesis, or as a result of ribosome stalling. Catalyzes the release of premature peptidyl moieties from peptidyl-tRNA molecules trapped in stalled 50S ribosomal subunits, and thus maintains levels of free tRNAs and 50S ribosomes. The chain is Peptidyl-tRNA hydrolase from Mycoplasma pneumoniae (strain ATCC 29342 / M129 / Subtype 1) (Mycoplasmoides pneumoniae).